A 213-amino-acid polypeptide reads, in one-letter code: StAR-related lipid transfer protein 5 (213 aa).

One can recognise an START domain in the interval 1–213 (MDLATAAQVS…LEKAVKKFFG (213 aa)).

Its function is as follows. May be involved in the intracellular transport of sterols or other lipids. May bind cholesterol or other sterols. This Bos taurus (Bovine) protein is StAR-related lipid transfer protein 5 (STARD5).